The following is a 257-amino-acid chain: UPF0246 protein Shal_1126 (257 aa).

The protein belongs to the UPF0246 family.

This Shewanella halifaxensis (strain HAW-EB4) protein is UPF0246 protein Shal_1126.